Reading from the N-terminus, the 117-residue chain is MAWTPLFLFLLTCCPGSNSQAVVTQEPSLTVSPGGTVTLTCGSSTGAVTSGHYPYWFQQKPGQAPRTLIYDTSNKHSWTPARFSGSLLGGKAALTLLGAQPEDEAEYYCLLSYSGAR.

The N-terminal stretch at 1-19 (MAWTPLFLFLLTCCPGSNS) is a signal peptide. A framework-1 region spans residues 20-44 (QAVVTQEPSLTVSPGGTVTLTCGSS). The Ig-like domain maps to 20–117 (QAVVTQEPSL…YCLLSYSGAR (98 aa)). Cysteine 41 and cysteine 109 form a disulfide bridge. Residues 45–53 (TGAVTSGHY) are complementarity-determining-1. The framework-2 stretch occupies residues 54-70 (PYWFQQKPGQAPRTLIY). The tract at residues 71–73 (DTS) is complementarity-determining-2. The interval 74–109 (NKHSWTPARFSGSLLGGKAALTLLGAQPEDEAEYYC) is framework-3. The complementarity-determining-3 stretch occupies residues 110–117 (LLSYSGAR).

As to quaternary structure, immunoglobulins are composed of two identical heavy chains and two identical light chains; disulfide-linked.

Its subcellular location is the secreted. It is found in the cell membrane. V region of the variable domain of immunoglobulin light chains that participates in the antigen recognition. Immunoglobulins, also known as antibodies, are membrane-bound or secreted glycoproteins produced by B lymphocytes. In the recognition phase of humoral immunity, the membrane-bound immunoglobulins serve as receptors which, upon binding of a specific antigen, trigger the clonal expansion and differentiation of B lymphocytes into immunoglobulins-secreting plasma cells. Secreted immunoglobulins mediate the effector phase of humoral immunity, which results in the elimination of bound antigens. The antigen binding site is formed by the variable domain of one heavy chain, together with that of its associated light chain. Thus, each immunoglobulin has two antigen binding sites with remarkable affinity for a particular antigen. The variable domains are assembled by a process called V-(D)-J rearrangement and can then be subjected to somatic hypermutations which, after exposure to antigen and selection, allow affinity maturation for a particular antigen. The protein is Immunoglobulin lambda variable 7-46 of Homo sapiens (Human).